The chain runs to 131 residues: Small ribosomal subunit protein bS6 (131 aa).

The tract at residues 96-131 is disordered; that stretch reads VTEASPMVKAKDERRERRDDFANETADDAEAGDSEE. A compositionally biased stretch (basic and acidic residues) spans 104-116; that stretch reads KAKDERRERRDDF. Over residues 120–131 the composition is skewed to acidic residues; sequence TADDAEAGDSEE.

This sequence belongs to the bacterial ribosomal protein bS6 family.

Its function is as follows. Binds together with bS18 to 16S ribosomal RNA. The polypeptide is Small ribosomal subunit protein bS6 (Salmonella arizonae (strain ATCC BAA-731 / CDC346-86 / RSK2980)).